Consider the following 391-residue polypeptide: Arrestin-C (391 aa).

The segment covering 369–379 (ARQEPGGREES) has biased composition (basic and acidic residues). The interval 369–391 (ARQEPGGREESQEALAAEGDEGS) is disordered.

It belongs to the arrestin family. Homodimer; disulfide-linked in response to retinal illumination. Interacts with CXCR4; the interaction is dependent on the C-terminal phosphorylation of CXCR4 and modulates the calcium ion mobilization activity of CXCR4. Interacts with GPR84.

It is found in the photoreceptor inner segment. It localises to the cell projection. The protein localises to the cilium. Its subcellular location is the photoreceptor outer segment. May play a role in an as yet undefined retina-specific signal transduction. Could bind to photoactivated-phosphorylated red/green opsins. In Sus scrofa (Pig), this protein is Arrestin-C (ARR3).